A 428-amino-acid polypeptide reads, in one-letter code: PGL/p-HBAD biosynthesis glycosyltransferase MRA_2985 (428 aa).

Residues 1-23 (MEETSVAGDPGPDAGTSTAPNAA) form a disordered region.

It belongs to the UDP-glycosyltransferase family.

Involved in glycosylation steps downstream of mono-O-methyl-glycosyl-p-hydroxybenzoic acid derivative (p-HBAD I) and 2-O-methyl-rhamnosyl-phenolphthiocerol dimycocerosate (mycoside B) during the p-hydroxybenzoic acid derivatives (p-HBAD) and glycosylated phenolphthiocerol dimycocerosates (PGL) biosynthesis. This is PGL/p-HBAD biosynthesis glycosyltransferase MRA_2985 from Mycobacterium tuberculosis (strain ATCC 25177 / H37Ra).